The primary structure comprises 157 residues: Protein GrpE (157 aa).

Residues M1–Q10 are compositionally biased toward basic and acidic residues. The interval M1–A21 is disordered.

It belongs to the GrpE family. Homodimer.

It localises to the cytoplasm. Participates actively in the response to hyperosmotic and heat shock by preventing the aggregation of stress-denatured proteins, in association with DnaK and GrpE. It is the nucleotide exchange factor for DnaK and may function as a thermosensor. Unfolded proteins bind initially to DnaJ; upon interaction with the DnaJ-bound protein, DnaK hydrolyzes its bound ATP, resulting in the formation of a stable complex. GrpE releases ADP from DnaK; ATP binding to DnaK triggers the release of the substrate protein, thus completing the reaction cycle. Several rounds of ATP-dependent interactions between DnaJ, DnaK and GrpE are required for fully efficient folding. The chain is Protein GrpE from Methylovorus sp. (strain SS1 / DSM 11726).